A 186-amino-acid polypeptide reads, in one-letter code: Ribosome-recycling factor (186 aa).

The protein belongs to the RRF family.

It is found in the cytoplasm. In terms of biological role, responsible for the release of ribosomes from messenger RNA at the termination of protein biosynthesis. May increase the efficiency of translation by recycling ribosomes from one round of translation to another. This Paraburkholderia phymatum (strain DSM 17167 / CIP 108236 / LMG 21445 / STM815) (Burkholderia phymatum) protein is Ribosome-recycling factor.